Here is a 117-residue protein sequence, read N- to C-terminus: Large ribosomal subunit protein uL22 (117 aa).

This sequence belongs to the universal ribosomal protein uL22 family. In terms of assembly, part of the 50S ribosomal subunit.

Functionally, this protein binds specifically to 23S rRNA; its binding is stimulated by other ribosomal proteins, e.g. L4, L17, and L20. It is important during the early stages of 50S assembly. It makes multiple contacts with different domains of the 23S rRNA in the assembled 50S subunit and ribosome. The globular domain of the protein is located near the polypeptide exit tunnel on the outside of the subunit, while an extended beta-hairpin is found that lines the wall of the exit tunnel in the center of the 70S ribosome. This Lactobacillus delbrueckii subsp. bulgaricus (strain ATCC 11842 / DSM 20081 / BCRC 10696 / JCM 1002 / NBRC 13953 / NCIMB 11778 / NCTC 12712 / WDCM 00102 / Lb 14) protein is Large ribosomal subunit protein uL22.